The chain runs to 66 residues: Large ribosomal subunit protein bL33c (66 aa).

Belongs to the bacterial ribosomal protein bL33 family.

Its subcellular location is the plastid. It localises to the chloroplast. The chain is Large ribosomal subunit protein bL33c from Lobularia maritima (Sweet alyssum).